The chain runs to 664 residues: DNA ligase (664 aa).

Residues 32–36 (DAEYD), 81–82 (SL), and Glu-113 each bind NAD(+). Catalysis depends on Lys-115, which acts as the N6-AMP-lysine intermediate. Arg-136, Glu-173, Lys-289, and Lys-313 together coordinate NAD(+). Zn(2+) contacts are provided by Cys-407, Cys-410, Cys-425, and Cys-431. Residues 586 to 664 (ASEQPFAGKT…EEQLQAALQS (79 aa)) enclose the BRCT domain.

This sequence belongs to the NAD-dependent DNA ligase family. LigA subfamily. Mg(2+) serves as cofactor. Mn(2+) is required as a cofactor.

The enzyme catalyses NAD(+) + (deoxyribonucleotide)n-3'-hydroxyl + 5'-phospho-(deoxyribonucleotide)m = (deoxyribonucleotide)n+m + AMP + beta-nicotinamide D-nucleotide.. Its function is as follows. DNA ligase that catalyzes the formation of phosphodiester linkages between 5'-phosphoryl and 3'-hydroxyl groups in double-stranded DNA using NAD as a coenzyme and as the energy source for the reaction. It is essential for DNA replication and repair of damaged DNA. The protein is DNA ligase of Aeromonas salmonicida (strain A449).